The chain runs to 256 residues: Na(+)-translocating NADH-quinone reductase subunit E (256 aa).

Helical transmembrane passes span 1–21 (MWLG…AAFI), 50–70 (MSVA…HAFI), 83–103 (LASV…IAAF), 123–143 (GIFL…LFGI), 149–169 (FIPM…AIVI), and 189–209 (MGIS…LTGI). Over residues 229-249 (ENTTNPLKESSSKHQPSISKA) the composition is skewed to polar residues. Residues 229–256 (ENTTNPLKESSSKHQPSISKARTQRRSL) are disordered.

Belongs to the NqrDE/RnfAE family. As to quaternary structure, composed of six subunits; NqrA, NqrB, NqrC, NqrD, NqrE and NqrF.

The protein resides in the cell inner membrane. The enzyme catalyses a ubiquinone + n Na(+)(in) + NADH + H(+) = a ubiquinol + n Na(+)(out) + NAD(+). Functionally, NQR complex catalyzes the reduction of ubiquinone-1 to ubiquinol by two successive reactions, coupled with the transport of Na(+) ions from the cytoplasm to the periplasm. NqrA to NqrE are probably involved in the second step, the conversion of ubisemiquinone to ubiquinol. The sequence is that of Na(+)-translocating NADH-quinone reductase subunit E from Chlamydia pneumoniae (Chlamydophila pneumoniae).